Here is a 415-residue protein sequence, read N- to C-terminus: Packaging protein 3 (415 aa).

Disordered stretches follow at residues 1–56 (MHPV…RRRA) and 66–85 (EGLARLGAPSPERHPRVQLK). The segment at 1–173 (MHPVLRQMRP…VNQEINFQKS (173 aa)) is interaction with packaging protein 1. Low complexity predominate over residues 31–46 (PTASGGATSAADAAAD). Position 75 is a phosphoserine; by host (serine 75). A compositionally biased stretch (basic and acidic residues) spans 76-85 (PERHPRVQLK). At serine 360 the chain carries Phosphoserine; by host. A compositionally biased stretch (low complexity) spans 381–394 (GAGPGLAVAPARAG). Residues 381–415 (GAGPGLAVAPARAGNVGGVEEYDEDDEYEPEDGEY) are disordered. The segment covering 400-415 (EEYDEDDEYEPEDGEY) has biased composition (acidic residues).

The protein belongs to the adenoviridae packaging protein 3 family. Part of the genome packaging complex composed of packaging proteins 1, 2 and 3; this complex specifically binds to the packaging sequence on the left end of viral genomic DNA and performs packaging of the viral genome. Interacts with hexon-linking protein IIIa; this interaction is required to promote correct genome packaging. In terms of processing, cleaved at different sites by the viral protease during virion maturation.

It localises to the host nucleus. In terms of biological role, involved in viral genome packaging through its interaction with packaging proteins 1 and 2. After proteolytic cleavage by adenovirus protease, L1 52/55k protein is removed from the capsid during viral maturation. This is Packaging protein 3 from Human adenovirus C serotype 2 (HAdV-2).